Consider the following 364-residue polypeptide: MGAGATGLRGARLSPEERANSSKSRAIDRALSKDHTDDLNRFKILLLGTAESGKSTIFKQMRVLHLDGYAKEDALEYLSIIHSNCMEALTQLVDACTAFGINHDITVQEDVNRFEDFKRKLRDPEGLVIPVVIGRCMDRVWHSPSLQLCYDTRRFRFALLDSAKYFMDNIVRLTEDNYVPSIQDIVHCRISTTGINELAFNYKKMDFKMVDVGGQRSERRKWIHCFDNVDMILFIVSMSDYDQLDPEDNKYNRMKQSYEIFKTIVHSDLFRHASIVLFLNKYDVFVEKLKTSPLRRSFKNYEGDNSEESAREFIKKLFRRCITDRHKFFVFETTATDTGNIDLVFGSAVAHIVNENLRSAGLHE.

Residues 1–29 (MGAGATGLRGARLSPEERANSSKSRAIDR) form a disordered region. A lipid anchor (N-myristoyl glycine) is attached at G2. Residues 14–29 (SPEERANSSKSRAIDR) are compositionally biased toward basic and acidic residues. The 324-residue stretch at 40–363 (NRFKILLLGT…NENLRSAGLH (324 aa)) folds into the G-alpha domain. A G1 motif region spans residues 43-56 (KILLLGTAESGKST). GTP-binding positions include 48–55 (GTAESGKS), 186–192 (VHCRIST), 211–215 (DVGGQ), 280–283 (NKYD), and A335. Mg(2+) contacts are provided by S55 and T192. Positions 184–192 (DIVHCRIST) are G2 motif. The segment at 207–216 (FKMVDVGGQR) is G3 motif. The G4 motif stretch occupies residues 276–283 (VLFLNKYD). Residues 333–338 (TTATDT) are G5 motif.

This sequence belongs to the G-alpha family. In terms of assembly, g proteins are composed of 3 units; alpha, beta and gamma. The alpha chain contains the guanine nucleotide binding site.

Functionally, guanine nucleotide-binding proteins (G proteins) are involved as modulators or transducers in various transmembrane signaling systems. This is Guanine nucleotide-binding protein alpha-6 subunit (gpa-6) from Caenorhabditis elegans.